A 332-amino-acid polypeptide reads, in one-letter code: Phenylalanine--tRNA ligase alpha subunit (332 aa).

Glutamate 254 serves as a coordination point for Mg(2+).

This sequence belongs to the class-II aminoacyl-tRNA synthetase family. Phe-tRNA synthetase alpha subunit type 1 subfamily. In terms of assembly, tetramer of two alpha and two beta subunits. The cofactor is Mg(2+).

Its subcellular location is the cytoplasm. It carries out the reaction tRNA(Phe) + L-phenylalanine + ATP = L-phenylalanyl-tRNA(Phe) + AMP + diphosphate + H(+). This chain is Phenylalanine--tRNA ligase alpha subunit, found in Hydrogenovibrio crunogenus (strain DSM 25203 / XCL-2) (Thiomicrospira crunogena).